A 224-amino-acid chain; its full sequence is uncharacterized protein (224 aa).

Helical transmembrane passes span 39–59 (LICL…FYSI), 70–90 (YLSL…ILFA), 103–123 (VFVF…IGAI), and 139–159 (MHIG…FLIT).

Its subcellular location is the membrane. This is an uncharacterized protein from Dictyostelium discoideum (Social amoeba).